A 545-amino-acid polypeptide reads, in one-letter code: Transducer protein Htr7 (545 aa).

Transmembrane regions (helical) follow at residues 10–30 (AVVAPLGDAVGAIGFGAAAAL), 44–64 (FWMAFTFASLLGVTWTVSLML), and 80–100 (PLMATTVAVFAIGGTATLAIV). The interval 111–157 (AQRRQEAEEERAEAERAREKAEQKQAEAERQTAEAESAKQDARERSA) is disordered. Over residues 123–157 (EAERAREKAEQKQAEAERQTAEAESAKQDARERSA) the composition is skewed to basic and acidic residues. Residues 164-217 (ADLESQATEVGATLEAASDGDLTARVDATTDNAEIAEVATVVNDMLTTMERTID) enclose the HAMP domain. In terms of domain architecture, Methyl-accepting transducer spans 236 to 476 (GAKEIQDASQ…RVVSSVDDIA (241 aa)). At Glu281 the chain carries Glutamate methyl ester (Glu). The interval 521-545 (LNEFRTEATGTAHGEATDAPAGQSD) is disordered. Residues 527–539 (EATGTAHGEATDA) are compositionally biased toward low complexity.

Belongs to the methyl-accepting chemotaxis (MCP) protein family. In terms of processing, methylated by CheR.

It is found in the cell membrane. In terms of biological role, potentially involved in chemo- or phototactic signal transduction. This chain is Transducer protein Htr7 (htr7), found in Halobacterium salinarum (strain ATCC 29341 / DSM 671 / R1).